The following is a 161-amino-acid chain: Transcription elongation factor GreB (161 aa).

This sequence belongs to the GreA/GreB family. GreB subfamily.

In terms of biological role, necessary for efficient RNA polymerase transcription elongation past template-encoded arresting sites. The arresting sites in DNA have the property of trapping a certain fraction of elongating RNA polymerases that pass through, resulting in locked ternary complexes. Cleavage of the nascent transcript by cleavage factors such as GreA or GreB allows the resumption of elongation from the new 3'terminus. GreB releases sequences of up to 9 nucleotides in length. This Vibrio cholerae serotype O1 (strain ATCC 39315 / El Tor Inaba N16961) protein is Transcription elongation factor GreB.